A 543-amino-acid polypeptide reads, in one-letter code: Malate synthase (543 aa).

The Proton acceptor role is filled by Arg-162. The Proton donor role is filled by Asp-449.

This sequence belongs to the malate synthase family.

It carries out the reaction glyoxylate + acetyl-CoA + H2O = (S)-malate + CoA + H(+). Its pathway is carbohydrate metabolism; glyoxylate cycle; (S)-malate from isocitrate: step 2/2. This chain is Malate synthase (masA), found in Dictyostelium discoideum (Social amoeba).